The primary structure comprises 107 residues: uncharacterized protein (107 aa).

3 helical membrane-spanning segments follow: residues 15–35, 43–63, and 87–107; these read TGSYNWFDHFFLCVYLALGIS, LYRVCFIFLFTGGFFLFWLSY, and YFPSSTWIAVLVFSWRHIFCF.

The protein resides in the membrane. This is an uncharacterized protein from Saccharomyces cerevisiae (strain ATCC 204508 / S288c) (Baker's yeast).